Reading from the N-terminus, the 131-residue chain is Calvin cycle protein CP12-2, chloroplastic (131 aa).

A chloroplast-targeting transit peptide spans 1-53; that stretch reads MATIATGLNIATQRVFVTSENRPVCLAGPVHLNNSWNLGSRTTNRMMKLQPIK. 2 disulfide bridges follow: C75-C84 and C117-C126. The segment at 97 to 131 is disordered; it reads AASHARDKKKADGSDPLEEYCKDNPETNECRTYDN. Residues 105–131 show a composition bias toward basic and acidic residues; it reads KKADGSDPLEEYCKDNPETNECRTYDN.

It belongs to the CP12 family. As to quaternary structure, monomer. Component of a complex that contains two dimers of PRK, two tetramers of GAPDH and CP12. CP12 associates with GAPDH, causing its conformation to change. This GAPDH/CP12 complex binds PRK to form a half-complex (one unit). This unit probably dimerizes due partially to interactions between the enzymes of each unit. Contains two disulfide bonds; only the oxidized protein, with two disulfide bonds, is active in complex formation. The C-terminal disulfide is involved in the interaction with GAPDH and the N-terminal disulfide mediates the binding of PRK with this binary complex. In terms of tissue distribution, mostly expressed in cotyledons, leaves and flower stalks, and, to a lower extent, in flowers and stems. Barely detectable in roots and siliques.

It is found in the plastid. Its subcellular location is the chloroplast. Acts as a linker essential in the assembly of a core complex of PRK/GAPDH. Coordinates the reversible inactivation of chloroplast enzymes GAPDH and PRK during darkness in photosynthetic tissues. The sequence is that of Calvin cycle protein CP12-2, chloroplastic (CP12-2) from Arabidopsis thaliana (Mouse-ear cress).